A 502-amino-acid chain; its full sequence is ATP synthase subunit alpha (502 aa).

169 to 176 contributes to the ATP binding site; sequence GDRQTGKT.

It belongs to the ATPase alpha/beta chains family. In terms of assembly, F-type ATPases have 2 components, CF(1) - the catalytic core - and CF(0) - the membrane proton channel. CF(1) has five subunits: alpha(3), beta(3), gamma(1), delta(1), epsilon(1). CF(0) has three main subunits: a(1), b(2) and c(9-12). The alpha and beta chains form an alternating ring which encloses part of the gamma chain. CF(1) is attached to CF(0) by a central stalk formed by the gamma and epsilon chains, while a peripheral stalk is formed by the delta and b chains.

It is found in the cell inner membrane. The enzyme catalyses ATP + H2O + 4 H(+)(in) = ADP + phosphate + 5 H(+)(out). Its function is as follows. Produces ATP from ADP in the presence of a proton gradient across the membrane. The alpha chain is a regulatory subunit. The protein is ATP synthase subunit alpha of Kosmotoga olearia (strain ATCC BAA-1733 / DSM 21960 / TBF 19.5.1).